A 244-amino-acid polypeptide reads, in one-letter code: Ribonuclease 3 (244 aa).

The region spanning 21-148 (DHAPLLEAWG…MLGAIYLHHG (128 aa)) is the RNase III domain. Glutamate 61 contributes to the Mg(2+) binding site. Aspartate 65 is a catalytic residue. Residues aspartate 134 and glutamate 137 each coordinate Mg(2+). The active site involves glutamate 137. The region spanning 175–242 (DWKTVLLEKL…AKQAVQKLNE (68 aa)) is the DRBM domain.

It belongs to the ribonuclease III family. In terms of assembly, homodimer. It depends on Mg(2+) as a cofactor.

It is found in the cytoplasm. It carries out the reaction Endonucleolytic cleavage to 5'-phosphomonoester.. Functionally, digests double-stranded RNA. Involved in the processing of primary rRNA transcript to yield the immediate precursors to the large and small rRNAs (23S and 16S). Processes some mRNAs, and tRNAs when they are encoded in the rRNA operon. Processes pre-crRNA and tracrRNA of type II CRISPR loci if present in the organism. The chain is Ribonuclease 3 from Corynebacterium jeikeium (strain K411).